A 157-amino-acid chain; its full sequence is Endoribonuclease YbeY (157 aa).

Residues H112, H116, and H122 each contribute to the Zn(2+) site.

The protein belongs to the endoribonuclease YbeY family. Requires Zn(2+) as cofactor.

It localises to the cytoplasm. Single strand-specific metallo-endoribonuclease involved in late-stage 70S ribosome quality control and in maturation of the 3' terminus of the 16S rRNA. This chain is Endoribonuclease YbeY, found in Marinobacter nauticus (strain ATCC 700491 / DSM 11845 / VT8) (Marinobacter aquaeolei).